The chain runs to 159 residues: Small ribosomal subunit protein bS16 (159 aa).

Over residues 102–119 the composition is skewed to low complexity; it reads GIPEAAEEAPATESVAEA. Residues 102–159 form a disordered region; it reads GIPEAAEEAPATESVAEAEVADVPESELSEAATETAAAELSPPEAEVEKPQVEEAVEA. The span at 120 to 129 shows a compositional bias: acidic residues; that stretch reads EVADVPESEL. The span at 130–145 shows a compositional bias: low complexity; sequence SEAATETAAAELSPPE.

The protein belongs to the bacterial ribosomal protein bS16 family.

The polypeptide is Small ribosomal subunit protein bS16 (Synechococcus sp. (strain JA-2-3B'a(2-13)) (Cyanobacteria bacterium Yellowstone B-Prime)).